The sequence spans 992 residues: Aminopeptidase Q (992 aa).

The Cytoplasmic portion of the chain corresponds to 2 to 13 (GPPSSSGFYVSR). A helical; Signal-anchor for type II membrane protein transmembrane segment spans residues 14–34 (AVALLLAALAAALLLALAVLA). Over 35-992 (ALYGRCARVQ…RMTAWLRKNT (958 aa)) the chain is Extracellular. The disordered stretch occupies residues 47–92 (DLHHSGVPDAASSPRGTQEEPLPTWPPRPTREPAGTATPGHWRPPG). The N-linked (GlcNAc...) asparagine glycan is linked to N133. E241 lines the substrate pocket. N-linked (GlcNAc...) asparagine glycans are attached at residues N262, N289, N347, and N361. Residue 380-384 (SAMEN) coordinates substrate. H416 contributes to the Zn(2+) binding site. Residue E417 is the Proton acceptor of the active site. H420 and E439 together coordinate Zn(2+). The active-site Proton donor is Y505. N-linked (GlcNAc...) asparagine glycosylation is found at N555, N584, N602, N609, N655, N811, N850, and N889.

The protein belongs to the peptidase M1 family. Zn(2+) serves as cofactor. As to expression, expressed in skin. Expression levels do not differ between dark and light skin areas.

The protein resides in the membrane. Its function is as follows. Metalloprotease which may be important for placentation by regulating biological activity of key peptides at the embryo-maternal interface. Involved in coat pigmentation patterns. During skin development, may be required to establish the periodicity of tabby markings, initiating a pre-pattern at or before hair follicle development. In Felis catus (Cat), this protein is Aminopeptidase Q (LVRN).